Here is a 123-residue protein sequence, read N- to C-terminus: Ribosome-binding factor A (123 aa).

This sequence belongs to the RbfA family. In terms of assembly, monomer. Binds 30S ribosomal subunits, but not 50S ribosomal subunits or 70S ribosomes.

It is found in the cytoplasm. Its function is as follows. One of several proteins that assist in the late maturation steps of the functional core of the 30S ribosomal subunit. Associates with free 30S ribosomal subunits (but not with 30S subunits that are part of 70S ribosomes or polysomes). Required for efficient processing of 16S rRNA. May interact with the 5'-terminal helix region of 16S rRNA. This Dechloromonas aromatica (strain RCB) protein is Ribosome-binding factor A.